The sequence spans 242 residues: MSGFFITATDTEVGKTVVAGAIAGVFRELGYNVGVYKPLQSGHVASNPEGDAARLKSLSGVPTQENEICPYSIEEPLAPRLAMKRAGRVVKLKEITDYYNGLLKEFNSLFVEGAGGLAVPYTEDALVIDFAKELQLPLIVVARPTLGTVNHTVLTIAYAKAHGLTVAGVILSGCKECEMERVQENKEMIEELSGVPVLGLLPFFAGEFTKEEVLESAKEHIMISKLEEFIQNESNVAGAPSM.

12-17 (EVGKTV) lines the ATP pocket. Residue Thr-16 coordinates Mg(2+). Lys-37 is a catalytic residue. Substrate is bound at residue Ser-41. ATP contacts are provided by residues Asp-51 and 112 to 115 (EGAG). Residues Asp-51 and Glu-112 each coordinate Mg(2+).

Belongs to the dethiobiotin synthetase family. As to quaternary structure, homodimer. It depends on Mg(2+) as a cofactor.

The protein localises to the cytoplasm. It catalyses the reaction (7R,8S)-7,8-diammoniononanoate + CO2 + ATP = (4R,5S)-dethiobiotin + ADP + phosphate + 3 H(+). It participates in cofactor biosynthesis; biotin biosynthesis; biotin from 7,8-diaminononanoate: step 1/2. Functionally, catalyzes a mechanistically unusual reaction, the ATP-dependent insertion of CO2 between the N7 and N8 nitrogen atoms of 7,8-diaminopelargonic acid (DAPA, also called 7,8-diammoniononanoate) to form a ureido ring. In Bacillus cereus (strain ATCC 14579 / DSM 31 / CCUG 7414 / JCM 2152 / NBRC 15305 / NCIMB 9373 / NCTC 2599 / NRRL B-3711), this protein is ATP-dependent dethiobiotin synthetase BioD.